The chain runs to 423 residues: Gamma-glutamyl phosphate reductase (423 aa).

Low complexity predominate over residues 1 to 14 (MTLQAAPRSAAAQQ). A disordered region spans residues 1 to 25 (MTLQAAPRSAAAQQREPDLRQEVHD). Over residues 15–25 (REPDLRQEVHD) the composition is skewed to basic and acidic residues.

This sequence belongs to the gamma-glutamyl phosphate reductase family.

Its subcellular location is the cytoplasm. It carries out the reaction L-glutamate 5-semialdehyde + phosphate + NADP(+) = L-glutamyl 5-phosphate + NADPH + H(+). Its pathway is amino-acid biosynthesis; L-proline biosynthesis; L-glutamate 5-semialdehyde from L-glutamate: step 2/2. Its function is as follows. Catalyzes the NADPH-dependent reduction of L-glutamate 5-phosphate into L-glutamate 5-semialdehyde and phosphate. The product spontaneously undergoes cyclization to form 1-pyrroline-5-carboxylate. The protein is Gamma-glutamyl phosphate reductase of Mycobacterium marinum (strain ATCC BAA-535 / M).